Here is a 346-residue protein sequence, read N- to C-terminus: Holliday junction branch migration complex subunit RuvB (346 aa).

The segment at 1–182 (MSERLVTSNE…FGVLCSMEYY (182 aa)) is large ATPase domain (RuvB-L). ATP is bound by residues Leu21, Arg22, Gly63, Lys66, Thr67, Thr68, 129-131 (EDY), Arg172, Tyr182, and Arg219. Position 67 (Thr67) interacts with Mg(2+). The tract at residues 183–253 (TDEQLKEIII…AAKKSLEILE (71 aa)) is small ATPAse domain (RuvB-S). The head domain (RuvB-H) stretch occupies residues 256–346 (GEGFDRIDNK…DSKQCTLFEK (91 aa)). DNA-binding residues include Arg311 and Arg316.

This sequence belongs to the RuvB family. In terms of assembly, homohexamer. Forms an RuvA(8)-RuvB(12)-Holliday junction (HJ) complex. HJ DNA is sandwiched between 2 RuvA tetramers; dsDNA enters through RuvA and exits via RuvB. An RuvB hexamer assembles on each DNA strand where it exits the tetramer. Each RuvB hexamer is contacted by two RuvA subunits (via domain III) on 2 adjacent RuvB subunits; this complex drives branch migration. In the full resolvosome a probable DNA-RuvA(4)-RuvB(12)-RuvC(2) complex forms which resolves the HJ.

It is found in the cytoplasm. The catalysed reaction is ATP + H2O = ADP + phosphate + H(+). Functionally, the RuvA-RuvB-RuvC complex processes Holliday junction (HJ) DNA during genetic recombination and DNA repair, while the RuvA-RuvB complex plays an important role in the rescue of blocked DNA replication forks via replication fork reversal (RFR). RuvA specifically binds to HJ cruciform DNA, conferring on it an open structure. The RuvB hexamer acts as an ATP-dependent pump, pulling dsDNA into and through the RuvAB complex. RuvB forms 2 homohexamers on either side of HJ DNA bound by 1 or 2 RuvA tetramers; 4 subunits per hexamer contact DNA at a time. Coordinated motions by a converter formed by DNA-disengaged RuvB subunits stimulates ATP hydrolysis and nucleotide exchange. Immobilization of the converter enables RuvB to convert the ATP-contained energy into a lever motion, pulling 2 nucleotides of DNA out of the RuvA tetramer per ATP hydrolyzed, thus driving DNA branch migration. The RuvB motors rotate together with the DNA substrate, which together with the progressing nucleotide cycle form the mechanistic basis for DNA recombination by continuous HJ branch migration. Branch migration allows RuvC to scan DNA until it finds its consensus sequence, where it cleaves and resolves cruciform DNA. This Clostridium perfringens (strain ATCC 13124 / DSM 756 / JCM 1290 / NCIMB 6125 / NCTC 8237 / Type A) protein is Holliday junction branch migration complex subunit RuvB.